The chain runs to 124 residues: Transcription initiation factor TFIID subunit 13 (124 aa).

Over residues 1–16 (MADEEEDPTFEEENEE) the composition is skewed to acidic residues. The interval 1-28 (MADEEEDPTFEEENEEIGGGAEGGQGKR) is disordered. In terms of domain architecture, Histone-fold spans 32-74 (FSKELRCMMYGFGDDQNPYTESVDILEDLVIEFITEMTHKAMS).

This sequence belongs to the TAF13 family. In terms of assembly, component of the TFIID basal transcription factor complex, composed of TATA-box-binding protein TBP, and a number of TBP-associated factors (TAFs), including TAF1, TAF2, TAF3, TAF4, TAF5, TAF6, TAF7, TAF8, TAF9, TAF10, TAF11, TAF12 and TAF13. Interacts with TBP, and more strongly with TAF10 and TAF11.

It localises to the nucleus. In terms of biological role, the TFIID basal transcription factor complex plays a major role in the initiation of RNA polymerase II (Pol II)-dependent transcription. TFIID recognizes and binds promoters via its subunit TBP, a TATA-box-binding protein, and promotes assembly of the pre-initiation complex (PIC). The TFIID complex consists of TBP and TBP-associated factors (TAFs), including TAF1, TAF2, TAF3, TAF4, TAF5, TAF6, TAF7, TAF8, TAF9, TAF10, TAF11, TAF12 and TAF13. TAF13, together with TAF11 and TBP, play key roles during promoter binding by the TFIID and TFIIA transcription factor complexes. The chain is Transcription initiation factor TFIID subunit 13 from Bos taurus (Bovine).